A 917-amino-acid chain; its full sequence is Low-density lipoprotein receptor-related protein 8 (917 aa).

A signal peptide spans 1-24; sequence MCRPALARLLLLQLLLLKLYLGKG. The Extracellular portion of the chain corresponds to 25 to 838; it reads AMKECDKDQF…GQGFDSTVTA (814 aa). LDL-receptor class A domains are found at residues 28–64, 67–105, 108–146, 148–184, and 187–225; these read ECDK…ADCP, TCAE…AACT, VCPA…AGCA, ACSP…KKCS, and TCSP…ERCG. Cystine bridges form between cysteine 29–cysteine 41, cysteine 36–cysteine 54, cysteine 48–cysteine 63, cysteine 68–cysteine 80, cysteine 75–cysteine 93, cysteine 87–cysteine 104, cysteine 109–cysteine 123, cysteine 116–cysteine 136, cysteine 130–cysteine 145, cysteine 149–cysteine 161, cysteine 156–cysteine 174, cysteine 168–cysteine 183, cysteine 188–cysteine 200, cysteine 195–cysteine 213, cysteine 207–cysteine 224, cysteine 241–cysteine 259, cysteine 253–cysteine 268, cysteine 273–cysteine 285, cysteine 280–cysteine 298, cysteine 292–cysteine 307, cysteine 313–cysteine 326, cysteine 321–cysteine 339, cysteine 333–cysteine 350, cysteine 355–cysteine 366, cysteine 362–cysteine 375, cysteine 377–cysteine 389, cysteine 395–cysteine 405, cysteine 401–cysteine 414, and cysteine 416–cysteine 429. Ca(2+) is bound by residues tryptophan 46, aspartate 49, aspartate 51, aspartate 53, aspartate 59, and glutamate 60. Asparagine 158 is a glycosylation site (N-linked (GlcNAc...) asparagine). N-linked (GlcNAc...) asparagine glycosylation is present at asparagine 196. LDL-receptor class A domains follow at residues 272 to 308 and 312 to 351; these read TCRP…AGCV and ACES…KECG. The EGF-like 1 domain maps to 346-390; the sequence is PLKECGINECSLNNGGCSHICKDLKIGYECECPPGYKLLDKKTCG. An EGF-like 2; calcium-binding domain is found at 391–430; the sequence is DIDECENPDACSQICINYKGDYKCECYEGYEMDTLSKNCK. 5 LDL-receptor class B repeats span residues 476–522, 523–565, 566–609, 610–652, and 653–695; these read NRIY…DWVH, KNIY…DPTR, RFMY…DLLN, QRLY…AVFE, and DRVF…FHEL. N-linked (GlcNAc...) asparagine glycosylation is present at asparagine 532. Asparagine 628 is a glycosylation site (N-linked (GlcNAc...) asparagine). Positions 754–813 are clustered O-linked oligosaccharides; it reads TTPATVEVPTTTTSHPAATSTVTVTGSANTTTAVIPRAVSEATTAIPSSHSTTSLLIDSE. N-linked (GlcNAc...) asparagine glycosylation is found at asparagine 782 and asparagine 820. Residues 839-861 form a helical membrane-spanning segment; that stretch reads AVIGIVIPVVVIGLLCMGGYLIW. At 862 to 917 the chain is on the cytoplasmic side; sequence RNWKRKNTKSMNFDNPVYRKTTEEEDEDEIHIGRTAQIGHVYPARVALSLEDDGLP.

It belongs to the LDLR family. As to quaternary structure, homooligomer. Mainly in brain.

It localises to the cell membrane. In terms of biological role, cell surface receptor for Reelin (RELN) and apolipoprotein E (apoE)-containing ligands. Also binds alpha2-macroglobulin. LRP8 participates in transmitting the extracellular Reelin signal to intracellular signaling processes, by binding to DAB1 on its cytoplasmic tail. Reelin acts via both the VLDL receptor (VLDLR) and LRP8 to regulate DAB1 tyrosine phosphorylation and microtubule function in neurons. LRP8 has higher affinity for Reelin than VLDLR. LRP8 is thus a key component of the Reelin pathway which governs neuronal layering of the forebrain during embryonic brain development. Not required for endocytic uptake of SEPP1 in the kidney which is mediated by LRP2. This is Low-density lipoprotein receptor-related protein 8 (LRP8) from Gallus gallus (Chicken).